The primary structure comprises 88 residues: Elongation factor 1-beta (88 aa).

It belongs to the EF-1-beta/EF-1-delta family.

Promotes the exchange of GDP for GTP in EF-1-alpha/GDP, thus allowing the regeneration of EF-1-alpha/GTP that could then be used to form the ternary complex EF-1-alpha/GTP/AAtRNA. The sequence is that of Elongation factor 1-beta (ef1b) from Archaeoglobus fulgidus (strain ATCC 49558 / DSM 4304 / JCM 9628 / NBRC 100126 / VC-16).